A 311-amino-acid polypeptide reads, in one-letter code: Thymidylate synthase (311 aa).

DUMP contacts are provided by residues R28 and 172–173 (RR). Catalysis depends on C192, which acts as the Nucleophile. Residues 213–216 (RSCD), N224, and 254–256 (HLY) each bind dUMP. Residue D216 coordinates (6R)-5,10-methylene-5,6,7,8-tetrahydrofolate. A310 is a binding site for (6R)-5,10-methylene-5,6,7,8-tetrahydrofolate.

The protein belongs to the thymidylate synthase family. Bacterial-type ThyA subfamily. In terms of assembly, homodimer.

It localises to the cytoplasm. It carries out the reaction dUMP + (6R)-5,10-methylene-5,6,7,8-tetrahydrofolate = 7,8-dihydrofolate + dTMP. It functions in the pathway pyrimidine metabolism; dTTP biosynthesis. Functionally, catalyzes the reductive methylation of 2'-deoxyuridine-5'-monophosphate (dUMP) to 2'-deoxythymidine-5'-monophosphate (dTMP) while utilizing 5,10-methylenetetrahydrofolate (mTHF) as the methyl donor and reductant in the reaction, yielding dihydrofolate (DHF) as a by-product. This enzymatic reaction provides an intracellular de novo source of dTMP, an essential precursor for DNA biosynthesis. The sequence is that of Thymidylate synthase from Sphingopyxis alaskensis (strain DSM 13593 / LMG 18877 / RB2256) (Sphingomonas alaskensis).